The primary structure comprises 498 residues: Transcription factor bHLH78 (498 aa).

Disordered regions lie at residues 1-24 (MDNE…FEHQ) and 207-297 (LVSP…PPKD). The segment covering 233-246 (NPISTASPSPSFSK) has biased composition (polar residues). The segment covering 259–270 (SSEEKGGKRRRE) has biased composition (basic and acidic residues). Residues 271–281 (EEDDEEEEGEG) show a composition bias toward acidic residues. A bHLH domain is found at 307-357 (QATDSHSLAERVRREKIGERMKLLQDLVPGCNKVTGKALMLDEIINYVQSL).

In terms of assembly, homodimer. Binds reversibly to CRY2 after blue light illumination. As to expression, expressed constitutively in roots, leaves, stems, and flowers.

Its subcellular location is the nucleus. Its function is as follows. Transcription factor that binds DNA to G box 5'-CACGTG-3' and to E-box 5'-CANNTG-3'. Binds to chromatin DNA of the FT gene and promotes its expression, and thus triggers flowering in response to blue light. The polypeptide is Transcription factor bHLH78 (BHLH78) (Arabidopsis thaliana (Mouse-ear cress)).